Reading from the N-terminus, the 338-residue chain is tRNA-specific 2-thiouridylase MnmA (338 aa).

ATP is bound by residues Leu-6–Ser-13 and Met-32. The active-site Nucleophile is the Cys-87. Cys-87 and Cys-185 are joined by a disulfide. ATP is bound at residue Gly-111. The tract at residues Lys-135 to Gln-137 is interaction with tRNA. Cys-185 acts as the Cysteine persulfide intermediate in catalysis. The segment at Arg-288–Tyr-289 is interaction with tRNA.

Belongs to the MnmA/TRMU family.

The protein localises to the cytoplasm. The catalysed reaction is S-sulfanyl-L-cysteinyl-[protein] + uridine(34) in tRNA + AH2 + ATP = 2-thiouridine(34) in tRNA + L-cysteinyl-[protein] + A + AMP + diphosphate + H(+). In terms of biological role, catalyzes the 2-thiolation of uridine at the wobble position (U34) of tRNA, leading to the formation of s(2)U34. The sequence is that of tRNA-specific 2-thiouridylase MnmA from Syntrophomonas wolfei subsp. wolfei (strain DSM 2245B / Goettingen).